Reading from the N-terminus, the 248-residue chain is tRNA pseudouridine synthase A (248 aa).

Catalysis depends on Asp53, which acts as the Nucleophile. Residue Tyr111 coordinates substrate.

It belongs to the tRNA pseudouridine synthase TruA family. As to quaternary structure, homodimer.

It catalyses the reaction uridine(38/39/40) in tRNA = pseudouridine(38/39/40) in tRNA. In terms of biological role, formation of pseudouridine at positions 38, 39 and 40 in the anticodon stem and loop of transfer RNAs. The chain is tRNA pseudouridine synthase A from Listeria welshimeri serovar 6b (strain ATCC 35897 / DSM 20650 / CCUG 15529 / CIP 8149 / NCTC 11857 / SLCC 5334 / V8).